The sequence spans 179 residues: Large ribosomal subunit protein uL5 (179 aa).

It belongs to the universal ribosomal protein uL5 family. In terms of assembly, part of the 50S ribosomal subunit; part of the 5S rRNA/L5/L18/L25 subcomplex. Contacts the 5S rRNA and the P site tRNA. Forms a bridge to the 30S subunit in the 70S ribosome.

Functionally, this is one of the proteins that bind and probably mediate the attachment of the 5S RNA into the large ribosomal subunit, where it forms part of the central protuberance. In the 70S ribosome it contacts protein S13 of the 30S subunit (bridge B1b), connecting the 2 subunits; this bridge is implicated in subunit movement. Contacts the P site tRNA; the 5S rRNA and some of its associated proteins might help stabilize positioning of ribosome-bound tRNAs. The sequence is that of Large ribosomal subunit protein uL5 from Verminephrobacter eiseniae (strain EF01-2).